The following is a 177-amino-acid chain: B-phycoerythrin beta chain (177 aa).

2 residues coordinate phycourobilin: C50 and C61. N4-methylasparagine is present on N72. Residues C82 and C158 each contribute to the (2R,3E)-phycoerythrobilin site.

This sequence belongs to the phycobiliprotein family. In terms of assembly, heteromer of 6 alpha, 6 beta and one gamma chain. Contains two covalently linked phycoerythrobilin chromophores and one covalently linked phycourobilin chromophore.

It localises to the plastid. The protein localises to the chloroplast thylakoid membrane. Its function is as follows. Light-harvesting photosynthetic bile pigment-protein from the phycobiliprotein complex. The polypeptide is B-phycoerythrin beta chain (cpeB) (Rhodella violacea (Red alga)).